Reading from the N-terminus, the 516-residue chain is Ammonium transporter Amt1 (516 aa).

11 helical membrane-spanning segments follow: residues 17 to 37 (YVWILVVSFLIFFMQPGFALL), 59 to 79 (ALGVLVYFVVGAGVATIVGGL), 101 to 121 (IDWLFGAVFAMTAATIVSGAV), 130 to 150 (YVVFAATITGFIYPVVQGLTW), 170 to 190 (LDFAGATVVHMCGGVAGLVGA), 214 to 234 (MLLAVLGTLILAFGWYGFNVG), 258 to 278 (VALVTTLGMGAGAVAAMVVST), 286 to 306 (PLWMANGLLAGLVAVTGAVPH), 307 to 327 (VTWWGGLVLGALGGAIVLPAY), 342 to 362 (VFAVHGVAGAVGTALIPVFAV), and 374 to 394 (VAGVGIIALWTIVASAVVFAA). Positions 426 to 516 (IGESGPDRGV…SAAVDGGENQ (91 aa)) are disordered. Positions 445–491 (NDVRTDGGNDVRTDGGNDVRTDGGNDVRTDGGNDVRTDGGNDVRTDG) are enriched in basic and acidic residues.

This sequence belongs to the ammonia transporter channel (TC 1.A.11.2) family. Homotrimer. Interacts with both GlnK1 and GlnK2 after ammonium shock. Interaction is rapid, reversible and dependent on nitrogen source.

It localises to the cell membrane. Functionally, involved in the uptake of ammonium/ammonia (NH(4)(+)/NH(3)). Transport is electrogenic. The sequence is that of Ammonium transporter Amt1 from Haloferax mediterranei (strain ATCC 33500 / DSM 1411 / JCM 8866 / NBRC 14739 / NCIMB 2177 / R-4) (Halobacterium mediterranei).